A 126-amino-acid chain; its full sequence is Holo-[acyl-carrier-protein] synthase (126 aa).

Residues Asp-9 and Glu-58 each contribute to the Mg(2+) site.

This sequence belongs to the P-Pant transferase superfamily. AcpS family. Mg(2+) is required as a cofactor.

Its subcellular location is the cytoplasm. It carries out the reaction apo-[ACP] + CoA = holo-[ACP] + adenosine 3',5'-bisphosphate + H(+). Its function is as follows. Transfers the 4'-phosphopantetheine moiety from coenzyme A to a Ser of acyl-carrier-protein. This chain is Holo-[acyl-carrier-protein] synthase, found in Escherichia fergusonii (strain ATCC 35469 / DSM 13698 / CCUG 18766 / IAM 14443 / JCM 21226 / LMG 7866 / NBRC 102419 / NCTC 12128 / CDC 0568-73).